A 223-amino-acid chain; its full sequence is Ras-related protein Rab-37 (223 aa).

Over residues 1-13 (MTGTPGAATAGDG) the composition is skewed to low complexity. Residues 1-22 (MTGTPGAATAGDGEAPERSPPF) form a disordered region. An N-acetylthreonine modification is found at T2. GTP-binding residues include S38, G39, V40, G41, K42, T43, C44, and T62. T43 serves as a coordination point for Mg(2+). Short sequence motifs (switch) lie at residues 52 to 67 (GAFL…GIDS) and 85 to 102 (DTAG…YYRD). The Mg(2+) site is built by T62 and D85. 7 residues coordinate GTP: G88, N143, K144, D146, S173, A174, and K175. 2 S-geranylgeranyl cysteine lipidation sites follow: C219 and C220. Position 220 is a cysteine methyl ester (C220). Positions 221 to 223 (SFV) are cleaved as a propeptide — removed in mature form.

The protein belongs to the small GTPase superfamily. Rab family. Interacts with RIMS1. Interacts (in GDP-bound form) with RPGR, RPGR functions as guanine exchange factor (GEF). The cofactor is Mg(2+). As to expression, expressed in the retina (at protein level). Specifically expressed in the bone marrow mast cells.

The protein resides in the cytoplasmic vesicle. It is found in the cell projection. The protein localises to the cilium. The enzyme catalyses GTP + H2O = GDP + phosphate + H(+). With respect to regulation, regulated by guanine nucleotide exchange factors (GEFs) including RPGR which promote the exchange of bound GDP for free GTP. Regulated by GTPase activating proteins (GAPs) which increase the GTP hydrolysis activity. Inhibited by GDP dissociation inhibitors (GDIs). In terms of biological role, the small GTPases Rab are key regulators of intracellular membrane trafficking, from the formation of transport vesicles to their fusion with membranes. Rabs cycle between an inactive GDP-bound form and an active GTP-bound form that is able to recruit to membranes different sets of downstream effectors directly responsible for vesicle formation, movement, tethering and fusion. Acts as an organizer for autophagosome biogenesis in a GTP-dependent manner. Involved in retinal homeostasis by autophagy regulation. This chain is Ras-related protein Rab-37, found in Mus musculus (Mouse).